Here is a 374-residue protein sequence, read N- to C-terminus: Resuscitation-promoting factor Rpf2 (374 aa).

The first 40 residues, 1 to 40, serve as a signal peptide directing secretion; the sequence is MAPHQKSRINRINSTRSVPLRLATGGVLATLLIGGVTAAA. In terms of domain architecture, G5 spans 210–290; the sequence is IDRVDNTEIT…PATISRGTKT (81 aa). The disordered stretch occupies residues 228-252; sequence PTYVDDPEAPAGDETVVEEGAPGTK.

Belongs to the transglycosylase family. Rpf subfamily. In terms of processing, glycosylated; by Pmt, by at least mannose and galactose. Other unidentified sugars may also be present. Post-translationally, may be subject to proteolytic cleavage as multiple shorter forms are detected in gels. At least 3 non-glycosylated protein isoforms of 35, 40 and 42 kDa are seen in gels.

The protein resides in the secreted. It is found in the cell surface. In terms of biological role, factor that stimulates resuscitation of dormant cells. Has peptidoglycan (PG) hydrolytic activity. Active in the pM concentration range. Has little to no effect on actively-growing cells. PG fragments could either directly activate the resuscitation pathway of dormant bacteria or serve as a substrate for endogenous Rpf, resulting in low molecular weight products with resuscitation activity. The chain is Resuscitation-promoting factor Rpf2 (rpf2) from Corynebacterium glutamicum (strain ATCC 13032 / DSM 20300 / JCM 1318 / BCRC 11384 / CCUG 27702 / LMG 3730 / NBRC 12168 / NCIMB 10025 / NRRL B-2784 / 534).